A 300-amino-acid polypeptide reads, in one-letter code: 4-hydroxy-tetrahydrodipicolinate synthase (300 aa).

Thr-54 provides a ligand contact to pyruvate. Tyr-142 acts as the Proton donor/acceptor in catalysis. Residue Lys-170 is the Schiff-base intermediate with substrate of the active site. Ile-212 contributes to the pyruvate binding site.

It belongs to the DapA family. Homotetramer; dimer of dimers.

It localises to the cytoplasm. It catalyses the reaction L-aspartate 4-semialdehyde + pyruvate = (2S,4S)-4-hydroxy-2,3,4,5-tetrahydrodipicolinate + H2O + H(+). It functions in the pathway amino-acid biosynthesis; L-lysine biosynthesis via DAP pathway; (S)-tetrahydrodipicolinate from L-aspartate: step 3/4. In terms of biological role, catalyzes the condensation of (S)-aspartate-beta-semialdehyde [(S)-ASA] and pyruvate to 4-hydroxy-tetrahydrodipicolinate (HTPA). This is 4-hydroxy-tetrahydrodipicolinate synthase from Halorhodospira halophila (strain DSM 244 / SL1) (Ectothiorhodospira halophila (strain DSM 244 / SL1)).